A 427-amino-acid polypeptide reads, in one-letter code: Glutamate-1-semialdehyde 2,1-aminomutase (427 aa).

N6-(pyridoxal phosphate)lysine is present on Lys-265.

Belongs to the class-III pyridoxal-phosphate-dependent aminotransferase family. HemL subfamily. Homodimer. Pyridoxal 5'-phosphate serves as cofactor.

The protein resides in the cytoplasm. The enzyme catalyses (S)-4-amino-5-oxopentanoate = 5-aminolevulinate. It functions in the pathway porphyrin-containing compound metabolism; protoporphyrin-IX biosynthesis; 5-aminolevulinate from L-glutamyl-tRNA(Glu): step 2/2. The polypeptide is Glutamate-1-semialdehyde 2,1-aminomutase (Pasteurella multocida (strain Pm70)).